We begin with the raw amino-acid sequence, 342 residues long: DNA-directed RNA polymerase subunit alpha (342 aa).

Residues 1–238 are alpha N-terminal domain (alpha-NTD); the sequence is MESLNVNAKN…DQLNMFVNFD (238 aa). The alpha C-terminal domain (alpha-CTD) stretch occupies residues 254 to 342; sequence FNKNLLRKVD…EMSKKLEEQI (89 aa).

It belongs to the RNA polymerase alpha chain family. In terms of assembly, homodimer. The RNAP catalytic core consists of 2 alpha, 1 beta, 1 beta' and 1 omega subunit. When a sigma factor is associated with the core the holoenzyme is formed, which can initiate transcription.

It carries out the reaction RNA(n) + a ribonucleoside 5'-triphosphate = RNA(n+1) + diphosphate. DNA-dependent RNA polymerase catalyzes the transcription of DNA into RNA using the four ribonucleoside triphosphates as substrates. The sequence is that of DNA-directed RNA polymerase subunit alpha from Pelagibacter ubique (strain HTCC1062).